Consider the following 332-residue polypeptide: Holliday junction branch migration complex subunit RuvB (332 aa).

The segment at methionine 1–tyrosine 181 is large ATPase domain (RuvB-L). Residues leucine 20, arginine 21, glycine 62, lysine 65, threonine 66, threonine 67, glutamate 128 to phenylalanine 130, arginine 171, tyrosine 181, and arginine 218 contribute to the ATP site. Threonine 66 contacts Mg(2+). The segment at glutamate 182–aspartate 252 is small ATPAse domain (RuvB-S). Residues glutamine 255–glutamate 332 form a head domain (RuvB-H) region. Residues arginine 291, arginine 310, arginine 312, and arginine 315 each coordinate DNA.

This sequence belongs to the RuvB family. As to quaternary structure, homohexamer. Forms an RuvA(8)-RuvB(12)-Holliday junction (HJ) complex. HJ DNA is sandwiched between 2 RuvA tetramers; dsDNA enters through RuvA and exits via RuvB. An RuvB hexamer assembles on each DNA strand where it exits the tetramer. Each RuvB hexamer is contacted by two RuvA subunits (via domain III) on 2 adjacent RuvB subunits; this complex drives branch migration. In the full resolvosome a probable DNA-RuvA(4)-RuvB(12)-RuvC(2) complex forms which resolves the HJ.

Its subcellular location is the cytoplasm. It carries out the reaction ATP + H2O = ADP + phosphate + H(+). The RuvA-RuvB-RuvC complex processes Holliday junction (HJ) DNA during genetic recombination and DNA repair, while the RuvA-RuvB complex plays an important role in the rescue of blocked DNA replication forks via replication fork reversal (RFR). RuvA specifically binds to HJ cruciform DNA, conferring on it an open structure. The RuvB hexamer acts as an ATP-dependent pump, pulling dsDNA into and through the RuvAB complex. RuvB forms 2 homohexamers on either side of HJ DNA bound by 1 or 2 RuvA tetramers; 4 subunits per hexamer contact DNA at a time. Coordinated motions by a converter formed by DNA-disengaged RuvB subunits stimulates ATP hydrolysis and nucleotide exchange. Immobilization of the converter enables RuvB to convert the ATP-contained energy into a lever motion, pulling 2 nucleotides of DNA out of the RuvA tetramer per ATP hydrolyzed, thus driving DNA branch migration. The RuvB motors rotate together with the DNA substrate, which together with the progressing nucleotide cycle form the mechanistic basis for DNA recombination by continuous HJ branch migration. Branch migration allows RuvC to scan DNA until it finds its consensus sequence, where it cleaves and resolves cruciform DNA. This chain is Holliday junction branch migration complex subunit RuvB, found in Streptococcus sanguinis (strain SK36).